The chain runs to 406 residues: WD repeat and SOCS box-containing protein 2 (406 aa).

Positions Ala-70–Thr-89 are disordered. WD repeat units follow at residues Pro-107–Asn-150, Gly-153–Gln-193, Gly-197–Lys-236, Gly-239–Ser-278, and Val-293–Phe-332. The region spanning His-358 to Phe-406 is the SOCS box domain.

It functions in the pathway protein modification; protein ubiquitination. Functionally, may be a substrate-recognition component of a SCF-like ECS (Elongin-Cullin-SOCS-box protein) E3 ubiquitin ligase complex which mediates the ubiquitination and subsequent proteasomal degradation of target proteins. The chain is WD repeat and SOCS box-containing protein 2 (WSB2) from Bos taurus (Bovine).